The following is a 374-amino-acid chain: Putative G-protein coupled receptor-like protein B0244.6 (374 aa).

The Extracellular portion of the chain corresponds to 1–54 (MTQNHYTTSIFANCSKHYEFEILLETCTNSTNPCHAVSQIQSAITIAYVDYYTS). The helical transmembrane segment at 55–75 (VALFSIAALLDIYCLIITIPL) threads the bilayer. The Cytoplasmic portion of the chain corresponds to 76-86 (YRRMKDDSKKK). The chain crosses the membrane as a helical span at residues 87-107 (YVFLITRCISGLLLVVAWLLI). Residues 108 to 137 (QCIYLRFIAPSQDNLPYYVLALALNIGSTY) are Extracellular-facing. Residues 138–158 (VLLGSYVGMAGILYLGVLNPI) traverse the membrane as a helical segment. Residues 159 to 169 (AFNQHLTLRIV) are Cytoplasmic-facing. Residues 170 to 190 (YIAVCIIFVISIFISIPLAIF) traverse the membrane as a helical segment. Topologically, residues 191 to 216 (QALMTVPTSSMSCTDTACAPLITLIN) are extracellular. A helical transmembrane segment spans residues 217–237 (FVLVFGSLITTTLTLTFVLIS). Residues 238 to 262 (LCRHRKEFKKLDTTSNTSLNSAVRL) are Cytoplasmic-facing. A helical membrane pass occupies residues 263-283 (LKFTLFAVLLLVAAEVIPFVI). The Extracellular portion of the chain corresponds to 284-304 (SETKKKHSVVTGCYYFYHSGK). A helical membrane pass occupies residues 305 to 325 (VIQYAVFALTESSIWSIALII). The Cytoplasmic segment spans residues 326-374 (DPLINIIFDRTVSKKATDQVKWMRKSCVGLVRKVTKRSNPENFTETSEI).

This sequence belongs to the G-protein coupled receptor 1 family. B0244 subfamily.

The protein resides in the cell membrane. This Caenorhabditis elegans protein is Putative G-protein coupled receptor-like protein B0244.6.